Consider the following 130-residue polypeptide: Small ribosomal subunit protein uS8 (130 aa).

This sequence belongs to the universal ribosomal protein uS8 family. Part of the 30S ribosomal subunit. Contacts proteins S5 and S12.

In terms of biological role, one of the primary rRNA binding proteins, it binds directly to 16S rRNA central domain where it helps coordinate assembly of the platform of the 30S subunit. The chain is Small ribosomal subunit protein uS8 from Shewanella sediminis (strain HAW-EB3).